A 151-amino-acid polypeptide reads, in one-letter code: Large ribosomal subunit protein bL9 (151 aa).

Belongs to the bacterial ribosomal protein bL9 family.

Its function is as follows. Binds to the 23S rRNA. The protein is Large ribosomal subunit protein bL9 of Rhodococcus jostii (strain RHA1).